The chain runs to 157 residues: Thioredoxin-T (157 aa).

The Thioredoxin domain occupies 2-107; it reads VYPVRNKDDL…LAKLMEKHAG (106 aa). A disulfide bond links Cys32 and Cys35. The segment at 132–157 is disordered; sequence ESSESDNDNNNVNEVSAHDENAVLEH. Residues 147–157 show a composition bias toward basic and acidic residues; sequence SAHDENAVLEH.

This sequence belongs to the thioredoxin family. As to expression, testis specific. Not expressed in the embryo. Becomes progressively more strongly expressed during larval and pupal development. In testis, it is strongly expressed in young spermatocytes, and postmeiotic spermatid stages, then expression decreases at the nuclear elongation stage. Strongly expressed in the waste bag, in which material no longer needed for the mature sperm is eliminated. Not expressed in the stem cells and spermatogonial cells.

It localises to the nucleus. The protein resides in the chromosome. In terms of biological role, probably participates in various redox reactions through the reversible oxidation of its active center dithiol to a disulfide and catalyzes dithiol-disulfide exchange reactions. Its tissue specificity suggests a regulatory role in the germline. This Drosophila melanogaster (Fruit fly) protein is Thioredoxin-T (TrxT).